A 116-amino-acid polypeptide reads, in one-letter code: Large ribosomal subunit protein bL19 (116 aa).

Belongs to the bacterial ribosomal protein bL19 family.

This protein is located at the 30S-50S ribosomal subunit interface and may play a role in the structure and function of the aminoacyl-tRNA binding site. The protein is Large ribosomal subunit protein bL19 of Mycoplasmopsis agalactiae (strain NCTC 10123 / CIP 59.7 / PG2) (Mycoplasma agalactiae).